Reading from the N-terminus, the 861-residue chain is E3 ubiquitin-protein ligase HECTD3 (861 aa).

At Ala-2 the chain carries N-acetylalanine. Position 12 is a phosphoserine (Ser-12). Residues 219–397 enclose the DOC domain; the sequence is DEDLIHFLYD…TSLVRYPRLE (179 aa). Residues 512 to 857 enclose the HECT domain; sequence YEKPLDYRWP…NCVAIDTDMS (346 aa). Cys-823 serves as the catalytic Glycyl thioester intermediate.

Interacts with TRIOBP. Interacts with STX8.

The protein resides in the cytoplasm. The protein localises to the perinuclear region. The catalysed reaction is S-ubiquitinyl-[E2 ubiquitin-conjugating enzyme]-L-cysteine + [acceptor protein]-L-lysine = [E2 ubiquitin-conjugating enzyme]-L-cysteine + N(6)-ubiquitinyl-[acceptor protein]-L-lysine.. Its pathway is protein modification; protein ubiquitination. In terms of biological role, E3 ubiquitin ligases accepts ubiquitin from an E2 ubiquitin-conjugating enzyme in the form of a thioester and then directly transfers the ubiquitin to targeted substrates. Mediates ubiquitination of TRIOBP and its subsequent proteasomal degradation, thus facilitating cell cycle progression by regulating the turn-over of TRIOBP. Mediates also ubiquitination of STX8. This chain is E3 ubiquitin-protein ligase HECTD3 (HECTD3), found in Homo sapiens (Human).